Reading from the N-terminus, the 675-residue chain is Methionine--tRNA ligase (675 aa).

Residues 15–25 (PYANGSIHLGH) carry the 'HIGH' region motif. 4 residues coordinate Zn(2+): Cys146, Cys149, Cys159, and Cys162. The 'KMSKS' region motif lies at 332–336 (KMSKS). Lys335 is a binding site for ATP. The tRNA-binding domain maps to 574–675 (DFAKLDLRIA…AGAKPGMRVK (102 aa)).

The protein belongs to the class-I aminoacyl-tRNA synthetase family. MetG type 1 subfamily. Homodimer. It depends on Zn(2+) as a cofactor.

Its subcellular location is the cytoplasm. It catalyses the reaction tRNA(Met) + L-methionine + ATP = L-methionyl-tRNA(Met) + AMP + diphosphate. Its function is as follows. Is required not only for elongation of protein synthesis but also for the initiation of all mRNA translation through initiator tRNA(fMet) aminoacylation. This Tolumonas auensis (strain DSM 9187 / NBRC 110442 / TA 4) protein is Methionine--tRNA ligase.